We begin with the raw amino-acid sequence, 351 residues long: S-adenosylmethionine:tRNA ribosyltransferase-isomerase (351 aa).

This sequence belongs to the QueA family. As to quaternary structure, monomer.

The protein localises to the cytoplasm. It catalyses the reaction 7-aminomethyl-7-carbaguanosine(34) in tRNA + S-adenosyl-L-methionine = epoxyqueuosine(34) in tRNA + adenine + L-methionine + 2 H(+). It functions in the pathway tRNA modification; tRNA-queuosine biosynthesis. Functionally, transfers and isomerizes the ribose moiety from AdoMet to the 7-aminomethyl group of 7-deazaguanine (preQ1-tRNA) to give epoxyqueuosine (oQ-tRNA). The polypeptide is S-adenosylmethionine:tRNA ribosyltransferase-isomerase (Hydrogenovibrio crunogenus (strain DSM 25203 / XCL-2) (Thiomicrospira crunogena)).